A 776-amino-acid polypeptide reads, in one-letter code: G protein-regulated inducer of neurite outgrowth 3 (776 aa).

2 disordered regions span residues methionine 1–proline 37 and valine 68–valine 312. Low complexity predominate over residues glutamine 101 to glycine 118. Composition is skewed to polar residues over residues proline 129–threonine 161 and glutamate 193–valine 203. Residues valine 208–glycine 217 show a composition bias toward low complexity. A compositionally biased stretch (polar residues) spans serine 242–proline 274. A phosphoserine mark is found at serine 332 and serine 365. 2 disordered regions span residues isoleucine 518 to arginine 637 and leucine 723 to arginine 748. The segment covering lysine 520 to threonine 552 has biased composition (basic and acidic residues). Positions proline 566–proline 580 are enriched in polar residues. Residues serine 604 to glycine 620 are compositionally biased toward low complexity. Residues lysine 725 to asparagine 742 show a composition bias toward polar residues.

Its function is as follows. May be involved in neurite outgrowth. This is G protein-regulated inducer of neurite outgrowth 3 (GPRIN3) from Homo sapiens (Human).